A 458-amino-acid chain; its full sequence is Probable mitochondrial chaperone BCS1-B (458 aa).

Topologically, residues 1–26 (MENVITNNNKGLPKSILKFIPEPIQP) are mitochondrial intermembrane. A helical transmembrane segment spans residues 27–47 (LFENPFFSAGFGLIGVGSILA). Topologically, residues 48-458 (MGRKGFQQAM…INNLNELIKK (411 aa)) are mitochondrial matrix. 248-255 (GPPGTGKS) contributes to the ATP binding site.

It belongs to the AAA ATPase family. BCS1 subfamily.

It is found in the mitochondrion inner membrane. The catalysed reaction is ATP + H2O = ADP + phosphate + H(+). Functionally, chaperone necessary for the assembly of mitochondrial respiratory chain complex III. This Dictyostelium discoideum (Social amoeba) protein is Probable mitochondrial chaperone BCS1-B (bcsl1b).